Reading from the N-terminus, the 194-residue chain is Fibroblast growth factor 7 (194 aa).

Residues 1–31 form the signal peptide; it reads MRKWILTWILPTLLYRSCFHIICLVGTISLA. Residue asparagine 45 is glycosylated (N-linked (GlcNAc...) asparagine).

The protein belongs to the heparin-binding growth factors family. As to quaternary structure, interacts with FGFBP1. Interacts with FGFR2. Affinity between fibroblast growth factors (FGFs) and their receptors is increased by heparan sulfate glycosaminoglycans that function as coreceptors.

It is found in the secreted. Functionally, plays an important role in the regulation of embryonic development, cell proliferation and cell differentiation. Required for normal branching morphogenesis. Growth factor active on keratinocytes. Possible major paracrine effector of normal epithelial cell proliferation. This Canis lupus familiaris (Dog) protein is Fibroblast growth factor 7 (FGF7).